Consider the following 565-residue polypeptide: NAD-dependent malic enzyme (565 aa).

Catalysis depends on Tyr104, which acts as the Proton donor. Residue Arg157 participates in NAD(+) binding. The active-site Proton acceptor is the Lys175. 3 residues coordinate a divalent metal cation: Glu246, Asp247, and Asp270. Residues Asp270 and Asn418 each coordinate NAD(+).

Belongs to the malic enzymes family. In terms of assembly, homotetramer. The cofactor is Mg(2+). Mn(2+) serves as cofactor.

It carries out the reaction (S)-malate + NAD(+) = pyruvate + CO2 + NADH. The enzyme catalyses oxaloacetate + H(+) = pyruvate + CO2. This Salmonella choleraesuis (strain SC-B67) protein is NAD-dependent malic enzyme.